A 154-amino-acid polypeptide reads, in one-letter code: Protein X (154 aa).

Residues Arg-28–Asp-48 are disordered. Positions Leu-30–Pro-46 are enriched in low complexity. The interval Pro-68–Phe-117 is mitochondrial targeting sequence.

The protein belongs to the orthohepadnavirus protein X family. In terms of assembly, may form homodimer. May interact with host CEBPA, CFLAR, CREB1, DDB1, E4F1, HBXIP, HSPD1/HSP60, NFKBIA, POLR2E and SMAD4. Interacts with host SMC5-SMC6 complex and induces its degradation. Interacts with host TRPC4AP; leading to prevent ubiquitination of TRPC4AP. Interacts with host PLSCR1; this interaction promotes ubiquitination and degradation of HBx and impairs HBx-mediated cell proliferation. Post-translationally, a fraction may be phosphorylated in insect cells and HepG2 cells, a human hepatoblastoma cell line. Phosphorylated in vitro by host protein kinase C or mitogen-activated protein kinase. N-acetylated in insect cells.

The protein localises to the host cytoplasm. The protein resides in the host nucleus. Its subcellular location is the host mitochondrion. In terms of biological role, multifunctional protein that plays a role in silencing host antiviral defenses and promoting viral transcription. Does not seem to be essential for HBV infection. May be directly involved in development of cirrhosis and liver cancer (hepatocellular carcinoma). Most of cytosolic activities involve modulation of cytosolic calcium. The effect on apoptosis is controversial depending on the cell types in which the studies have been conducted. May induce apoptosis by localizing in mitochondria and causing loss of mitochondrial membrane potential. May also modulate apoptosis by binding host CFLAR, a key regulator of the death-inducing signaling complex (DISC). Promotes viral transcription by using the host E3 ubiquitin ligase DDB1 to target the SMC5-SMC6 complex to proteasomal degradation. This host complex would otherwise bind to viral episomal DNA, and prevents its transcription. Moderately stimulates transcription of many different viral and cellular transcription elements. Promoters and enhancers stimulated by HBx contain DNA binding sites for NF-kappa-B, AP-1, AP-2, c-EBP, ATF/CREB, or the calcium-activated factor NF-AT. The polypeptide is Protein X (Homo sapiens (Human)).